Reading from the N-terminus, the 517-residue chain is ATP synthase subunit alpha (517 aa).

174 to 181 contributes to the ATP binding site; it reads GDRQTGKT.

It belongs to the ATPase alpha/beta chains family. In terms of assembly, F-type ATPases have 2 components, CF(1) - the catalytic core - and CF(0) - the membrane proton channel. CF(1) has five subunits: alpha(3), beta(3), gamma(1), delta(1), epsilon(1). CF(0) has three main subunits: a(1), b(2) and c(9-12). The alpha and beta chains form an alternating ring which encloses part of the gamma chain. CF(1) is attached to CF(0) by a central stalk formed by the gamma and epsilon chains, while a peripheral stalk is formed by the delta and b chains.

Its subcellular location is the cell inner membrane. The enzyme catalyses ATP + H2O + 4 H(+)(in) = ADP + phosphate + 5 H(+)(out). Functionally, produces ATP from ADP in the presence of a proton gradient across the membrane. The alpha chain is a regulatory subunit. This is ATP synthase subunit alpha from Polaromonas sp. (strain JS666 / ATCC BAA-500).